Reading from the N-terminus, the 463-residue chain is O-phospho-L-seryl-tRNA:Cys-tRNA synthase 2 (463 aa).

Pyridoxal 5'-phosphate contacts are provided by residues 154–155 (AR), asparagine 259, and 282–284 (SGH). Residue lysine 285 is modified to N6-(pyridoxal phosphate)lysine.

It belongs to the SepCysS family. As to quaternary structure, homodimer. Interacts with SepRS. Pyridoxal 5'-phosphate serves as cofactor.

The enzyme catalyses O-phospho-L-seryl-tRNA(Cys) + hydrogen sulfide + H(+) = L-cysteinyl-tRNA(Cys) + phosphate. Converts O-phospho-L-seryl-tRNA(Cys) (Sep-tRNA(Cys)) to L-cysteinyl-tRNA(Cys) (Cys-tRNA(Cys)). The protein is O-phospho-L-seryl-tRNA:Cys-tRNA synthase 2 of Methanocella arvoryzae (strain DSM 22066 / NBRC 105507 / MRE50).